A 71-amino-acid chain; its full sequence is Large ribosomal subunit protein bL31 (71 aa).

Zn(2+)-binding residues include Cys-16, Cys-18, Cys-36, and Cys-39.

Belongs to the bacterial ribosomal protein bL31 family. Type A subfamily. In terms of assembly, part of the 50S ribosomal subunit. It depends on Zn(2+) as a cofactor.

Binds the 23S rRNA. The sequence is that of Large ribosomal subunit protein bL31 from Thermotoga sp. (strain RQ2).